We begin with the raw amino-acid sequence, 79 residues long: Conotoxin TsMSGL-2 (79 aa).

Residues 1 to 24 form the signal peptide; that stretch reads MSGLGIMVLTLLLLVFMATSHQDA. A propeptide spanning residues 25-46 is cleaved from the precursor; that stretch reads GEKQATQRDAVNVRRRRSIAGR. Disulfide bonds link Cys-52–Cys-64, Cys-56–Cys-73, and Cys-63–Cys-77. Leu-78 bears the Leucine amide mark.

It belongs to the conotoxin O3 superfamily. As to expression, expressed by the venom duct.

It localises to the secreted. The protein is Conotoxin TsMSGL-2 of Conus tessulatus (Tessellate cone).